Here is a 578-residue protein sequence, read N- to C-terminus: Aspartate--tRNA ligase (578 aa).

L-aspartate is bound at residue E169. The segment at 191–194 (QTFK) is aspartate. R213 is a binding site for L-aspartate. ATP contacts are provided by residues 213-215 (RDE) and Q222. Residue H440 participates in L-aspartate binding. E474 serves as a coordination point for ATP. R481 contacts L-aspartate. Residue 526-529 (GLDR) participates in ATP binding.

It belongs to the class-II aminoacyl-tRNA synthetase family. Type 1 subfamily. Homodimer.

It is found in the cytoplasm. The catalysed reaction is tRNA(Asp) + L-aspartate + ATP = L-aspartyl-tRNA(Asp) + AMP + diphosphate. Functionally, catalyzes the attachment of L-aspartate to tRNA(Asp) in a two-step reaction: L-aspartate is first activated by ATP to form Asp-AMP and then transferred to the acceptor end of tRNA(Asp). The protein is Aspartate--tRNA ligase of Ureaplasma parvum serovar 3 (strain ATCC 700970).